The primary structure comprises 725 residues: Protein ALEX (725 aa).

Disordered regions lie at residues 1–93, 177–226, 256–340, 396–481, 508–528, 584–624, and 638–675; these read MSPS…ARAQ, GAIA…PLTD, EPPL…PSQP, PILT…SPLL, PMQVHWSGEPGHSQLLPPLGH, LPGL…AASS, and ATRSGATQSATSSPEPSEAASVYPSVPDHDPSAPGRPR. Residues 41–51 are compositionally biased toward basic residues; sequence HLRRKPCHSRH. Polar residues predominate over residues 260–276; the sequence is GSTTTPLSIWTAPQSQV. 2 stretches are compositionally biased toward basic and acidic residues: residues 297–307 and 314–326; these read QLSEKQPRWKE and RWKEKSPLRREGT. Pro residues-rich tracts occupy residues 423–442 and 459–473; these read PSQPPRQSLPPRPSLPPGQP and RSLPPGQPLSPPRSP. Composition is skewed to low complexity over residues 584–598 and 643–658; these read LPGLTSTSGAEAAAG and ATQSATSSPEPSEAAS.

Belongs to the ALEX family. Interacts with the N-terminal region of the XLas isoforms of guanine nucleotide-binding protein G(s) subunit alpha.

The protein localises to the cell membrane. It is found in the cell projection. The protein resides in the ruffle. In terms of biological role, may inhibit the adenylyl cyclase-stimulating activity of guanine nucleotide-binding protein G(s) subunit alpha which is produced from the same locus in a different open reading frame. This is Protein ALEX from Mus musculus (Mouse).